The chain runs to 352 residues: DNA polymerase IV (352 aa).

The region spanning 7 to 187 (IIHIDMDCFY…LSLKKIPGIG (181 aa)) is the UmuC domain. Mg(2+) contacts are provided by aspartate 11 and aspartate 105. Glutamate 106 is an active-site residue.

It belongs to the DNA polymerase type-Y family. In terms of assembly, monomer. Mg(2+) is required as a cofactor.

The protein resides in the cytoplasm. It carries out the reaction DNA(n) + a 2'-deoxyribonucleoside 5'-triphosphate = DNA(n+1) + diphosphate. Functionally, poorly processive, error-prone DNA polymerase involved in untargeted mutagenesis. Copies undamaged DNA at stalled replication forks, which arise in vivo from mismatched or misaligned primer ends. These misaligned primers can be extended by PolIV. Exhibits no 3'-5' exonuclease (proofreading) activity. May be involved in translesional synthesis, in conjunction with the beta clamp from PolIII. The sequence is that of DNA polymerase IV from Colwellia psychrerythraea (strain 34H / ATCC BAA-681) (Vibrio psychroerythus).